The sequence spans 939 residues: Translation initiation factor IF-2 (939 aa).

Disordered stretches follow at residues 51 to 81 (LGTKESGQDTGQATNEAAAAHRPTTVIGGKK) and 137 to 353 (VTNK…EMKA). Residues 181-210 (NEKKAGAPEIKRAEHTETVEKSKTAVDSKK) are compositionally biased toward basic and acidic residues. The span at 259 to 277 (PVNRSPRPSTPSPNRSAGG) shows a compositional bias: low complexity. Positions 300–312 (RRDEKPAERDSRP) are enriched in basic and acidic residues. The tr-type G domain occupies 437 to 606 (GRCPVVTVMG…QLAAEMLELK (170 aa)). Residues 446 to 453 (GHVDHGKT) form a G1 region. Residue 446–453 (GHVDHGKT) coordinates GTP. Positions 471 to 475 (GITQH) are G2. The segment at 492–495 (DTPG) is G3. Residues 492 to 496 (DTPGH) and 546 to 549 (NKID) contribute to the GTP site. A G4 region spans residues 546 to 549 (NKID). The segment at 582–584 (SAK) is G5.

It belongs to the TRAFAC class translation factor GTPase superfamily. Classic translation factor GTPase family. IF-2 subfamily.

It is found in the cytoplasm. One of the essential components for the initiation of protein synthesis. Protects formylmethionyl-tRNA from spontaneous hydrolysis and promotes its binding to the 30S ribosomal subunits. Also involved in the hydrolysis of GTP during the formation of the 70S ribosomal complex. This Desulfotalea psychrophila (strain LSv54 / DSM 12343) protein is Translation initiation factor IF-2.